We begin with the raw amino-acid sequence, 227 residues long: PKHD-type hydroxylase ABSDF3031 (227 aa).

In terms of domain architecture, Fe2OG dioxygenase spans 78-178; the sequence is KIIPPLFNRY…RFASFFWVQS (101 aa). Residues H96, D98, and H159 each coordinate Fe cation. Residue R169 coordinates 2-oxoglutarate.

Fe(2+) is required as a cofactor. The cofactor is L-ascorbate.

This chain is PKHD-type hydroxylase ABSDF3031, found in Acinetobacter baumannii (strain SDF).